A 130-amino-acid chain; its full sequence is Small ribosomal subunit protein uS11 (130 aa).

The protein belongs to the universal ribosomal protein uS11 family. As to quaternary structure, part of the 30S ribosomal subunit.

In terms of biological role, located on the platform of the 30S subunit. This is Small ribosomal subunit protein uS11 from Nanoarchaeum equitans (strain Kin4-M).